The sequence spans 96 residues: Protein RnfH (96 aa).

This sequence belongs to the UPF0125 (RnfH) family.

The polypeptide is Protein RnfH (Psychromonas ingrahamii (strain DSM 17664 / CCUG 51855 / 37)).